A 201-amino-acid polypeptide reads, in one-letter code: 3-isopropylmalate dehydratase small subunit (201 aa).

This sequence belongs to the LeuD family. LeuD type 1 subfamily. In terms of assembly, heterodimer of LeuC and LeuD.

The catalysed reaction is (2R,3S)-3-isopropylmalate = (2S)-2-isopropylmalate. It participates in amino-acid biosynthesis; L-leucine biosynthesis; L-leucine from 3-methyl-2-oxobutanoate: step 2/4. Its function is as follows. Catalyzes the isomerization between 2-isopropylmalate and 3-isopropylmalate, via the formation of 2-isopropylmaleate. The sequence is that of 3-isopropylmalate dehydratase small subunit from Rhodopseudomonas palustris (strain BisB18).